The sequence spans 150 residues: UPF0756 membrane protein HAPS_1649 (150 aa).

The next 5 helical transmembrane spans lie at 1–21 (MSLQ…LGIF), 27–46 (VTIS…SKYV), 52–72 (YGIK…LVSG), 82–102 (LINW…WLGG), and 123–143 (IIGV…AGIL).

The protein belongs to the UPF0756 family.

It is found in the cell membrane. The polypeptide is UPF0756 membrane protein HAPS_1649 (Glaesserella parasuis serovar 5 (strain SH0165) (Haemophilus parasuis)).